The following is a 358-amino-acid chain: Probable cinnamyl alcohol dehydrogenase (358 aa).

Residue Cys48 participates in Zn(2+) binding. Ser50 contacts NADP(+). Residues His70, Glu71, Cys101, Cys104, Cys107, Cys115, and Cys164 each contribute to the Zn(2+) site. NADP(+) contacts are provided by residues Thr168, 189–194 (GLGGVG), 212–217 (SSSDKK), Thr252, Gly276, and 299–301 (SFV).

The protein belongs to the zinc-containing alcohol dehydrogenase family. As to quaternary structure, homodimer. Zn(2+) serves as cofactor. As to expression, most actively expressed in stem, hypocotyl and root tissue.

It carries out the reaction (E)-cinnamyl alcohol + NADP(+) = (E)-cinnamaldehyde + NADPH + H(+). It catalyses the reaction (E)-coniferol + NADP(+) = (E)-coniferaldehyde + NADPH + H(+). The catalysed reaction is (E)-sinapyl alcohol + NADP(+) = (E)-sinapaldehyde + NADPH + H(+). The enzyme catalyses (E)-4-coumaroyl alcohol + NADP(+) = (E)-4-coumaraldehyde + NADPH + H(+). It carries out the reaction (E)-caffeyl alcohol + NADP(+) = (E)-caffeyl aldehyde + NADPH + H(+). Its pathway is aromatic compound metabolism; phenylpropanoid biosynthesis. Functionally, this protein catalyzes the final step in a branch of phenylpropanoid synthesis specific for production of lignin monomers. It acts on coniferyl-, sinapyl-, 4-coumaryl- and cinnamyl-alcohol. The polypeptide is Probable cinnamyl alcohol dehydrogenase (CAD2) (Medicago sativa (Alfalfa)).